The sequence spans 454 residues: Metacaspase-1A (454 aa).

The span at 1–16 (MSYGYPGQGYGPGGGH) shows a compositional bias: gly residues. Residues 1–129 (MSYGYPGQGY…GHQTRNQGSH (129 aa)) form a disordered region. Low complexity-rich tracts occupy residues 38 to 47 (YSNPGQGQYN), 59 to 80 (YHQQ…YPPQ), 88 to 101 (GQQQ…HSQR), and 109 to 120 (GYDIYGYPIGSG). Catalysis depends on residues His244 and Cys300.

Belongs to the peptidase C14B family.

Involved in cell death (apoptosis). The polypeptide is Metacaspase-1A (casA) (Neurospora crassa (strain ATCC 24698 / 74-OR23-1A / CBS 708.71 / DSM 1257 / FGSC 987)).